The sequence spans 504 residues: Bifunctional purine biosynthesis protein PurH (504 aa).

One can recognise an MGS-like domain in the interval 1-144 (MRKRALISVY…KSFKNVVVIS (144 aa)).

Belongs to the PurH family.

The catalysed reaction is (6R)-10-formyltetrahydrofolate + 5-amino-1-(5-phospho-beta-D-ribosyl)imidazole-4-carboxamide = 5-formamido-1-(5-phospho-D-ribosyl)imidazole-4-carboxamide + (6S)-5,6,7,8-tetrahydrofolate. It carries out the reaction IMP + H2O = 5-formamido-1-(5-phospho-D-ribosyl)imidazole-4-carboxamide. It functions in the pathway purine metabolism; IMP biosynthesis via de novo pathway; 5-formamido-1-(5-phospho-D-ribosyl)imidazole-4-carboxamide from 5-amino-1-(5-phospho-D-ribosyl)imidazole-4-carboxamide (10-formyl THF route): step 1/1. Its pathway is purine metabolism; IMP biosynthesis via de novo pathway; IMP from 5-formamido-1-(5-phospho-D-ribosyl)imidazole-4-carboxamide: step 1/1. This is Bifunctional purine biosynthesis protein PurH from Fusobacterium nucleatum subsp. nucleatum (strain ATCC 25586 / DSM 15643 / BCRC 10681 / CIP 101130 / JCM 8532 / KCTC 2640 / LMG 13131 / VPI 4355).